Consider the following 208-residue polypeptide: Ubiquitin-conjugating enzyme E2 S (208 aa).

The UBC core domain occupies 14 to 160 (QTIRQVMKEL…ARMMTEIHAQ (147 aa)). Catalysis depends on Cys-98, which acts as the Glycyl thioester intermediate. Residues 161–196 (PAKCGAGASDAKDDDGPSTKKHAGVDKKLQDKKKEK) form a disordered region. Positions 170–196 (DAKDDDGPSTKKHAGVDKKLQDKKKEK) are enriched in basic and acidic residues.

It belongs to the ubiquitin-conjugating enzyme family.

The enzyme catalyses S-ubiquitinyl-[E1 ubiquitin-activating enzyme]-L-cysteine + [E2 ubiquitin-conjugating enzyme]-L-cysteine = [E1 ubiquitin-activating enzyme]-L-cysteine + S-ubiquitinyl-[E2 ubiquitin-conjugating enzyme]-L-cysteine.. It participates in protein modification; protein ubiquitination. Catalyzes the covalent attachment of ubiquitin to other proteins. Acts as an essential factor of the anaphase promoting complex/cyclosome (APC/C), a cell cycle-regulated ubiquitin ligase that controls progression through mitosis. Acts by specifically elongating polyubiquitin chains initiated by the E2 enzyme vih/UbcH10 on APC/C substrates, enhancing the degradation of APC/C substrates by the proteasome and promoting mitotic exit. The protein is Ubiquitin-conjugating enzyme E2 S of Drosophila grimshawi (Hawaiian fruit fly).